The primary structure comprises 313 residues: Ribosomal RNA small subunit methyltransferase H (313 aa).

S-adenosyl-L-methionine is bound by residues 34–36, Asp53, Phe80, Asp101, and Gln108; that span reads GGH.

This sequence belongs to the methyltransferase superfamily. RsmH family.

The protein resides in the cytoplasm. It carries out the reaction cytidine(1402) in 16S rRNA + S-adenosyl-L-methionine = N(4)-methylcytidine(1402) in 16S rRNA + S-adenosyl-L-homocysteine + H(+). In terms of biological role, specifically methylates the N4 position of cytidine in position 1402 (C1402) of 16S rRNA. This Lacticaseibacillus casei (strain BL23) (Lactobacillus casei) protein is Ribosomal RNA small subunit methyltransferase H.